We begin with the raw amino-acid sequence, 200 residues long: Phospholipase A2 inhibitor LNF2 (200 aa).

The N-terminal stretch at 1 to 19 (MKSLHTICLLFIFVARGNS) is a signal peptide. Cystine bridges form between Cys22–Cys46, Cys25–Cys32, Cys39–Cys67, Cys73–Cys94, Cys95–Cys100, Cys118–Cys143, Cys136–Cys165, and Cys169–Cys191. N-linked (GlcNAc...) asparagine glycosylation is present at Asn176.

This sequence belongs to the CNF-like-inhibitor family. As to quaternary structure, occurs as a mixture of oligomers. Tetrameric arrangement appears to be the predominant quaternary structure. In terms of tissue distribution, expressed by the liver.

The protein resides in the secreted. Inhibits the enzymatic activity of phospholipase A2 (PA2). The chain is Phospholipase A2 inhibitor LNF2 from Lachesis muta muta (Bushmaster).